Reading from the N-terminus, the 441-residue chain is Ribulose bisphosphate carboxylase large chain (441 aa).

Positions 89 and 139 each coordinate substrate. Residue lysine 141 is the Proton acceptor of the active site. Lysine 143 contacts substrate. Mg(2+)-binding residues include lysine 167, aspartate 169, and glutamate 170. N6-carboxylysine is present on lysine 167. The active-site Proton acceptor is histidine 260. Residue 261, histidine 293, and serine 345 together coordinate substrate.

Belongs to the RuBisCO large chain family. Type I subfamily. As to quaternary structure, heterohexadecamer of 8 large chains and 8 small chains; disulfide-linked. The disulfide link is formed within the large subunit homodimers. Mg(2+) is required as a cofactor. Post-translationally, the disulfide bond which can form in the large chain dimeric partners within the hexadecamer appears to be associated with oxidative stress and protein turnover.

It localises to the plastid. Its subcellular location is the chloroplast. The catalysed reaction is 2 (2R)-3-phosphoglycerate + 2 H(+) = D-ribulose 1,5-bisphosphate + CO2 + H2O. It catalyses the reaction D-ribulose 1,5-bisphosphate + O2 = 2-phosphoglycolate + (2R)-3-phosphoglycerate + 2 H(+). In terms of biological role, ruBisCO catalyzes two reactions: the carboxylation of D-ribulose 1,5-bisphosphate, the primary event in carbon dioxide fixation, as well as the oxidative fragmentation of the pentose substrate in the photorespiration process. Both reactions occur simultaneously and in competition at the same active site. The polypeptide is Ribulose bisphosphate carboxylase large chain (Apocynum cannabinum (Hemp dogbane)).